A 68-amino-acid chain; its full sequence is Inhibitor of trypsin and hageman factor (68 aa).

At S1 the chain carries N-acetylserine. A disulfide bond links C3 and C48.

The protein belongs to the protease inhibitor I13 (potato type I serine protease inhibitor) family.

In terms of biological role, specifically inhibits both trypsin and activated Hageman factor. This chain is Inhibitor of trypsin and hageman factor, found in Cucurbita maxima (Pumpkin).